A 435-amino-acid chain; its full sequence is 3-ketoacyl-CoA thiolase (435 aa).

Cys-98 acts as the Acyl-thioester intermediate in catalysis. Active-site proton acceptor residues include His-391 and Cys-421.

This sequence belongs to the thiolase-like superfamily. Thiolase family. As to quaternary structure, heterotetramer of two alpha chains (FadJ) and two beta chains (FadI).

It is found in the cytoplasm. It catalyses the reaction an acyl-CoA + acetyl-CoA = a 3-oxoacyl-CoA + CoA. It functions in the pathway lipid metabolism; fatty acid beta-oxidation. Functionally, catalyzes the final step of fatty acid oxidation in which acetyl-CoA is released and the CoA ester of a fatty acid two carbons shorter is formed. The protein is 3-ketoacyl-CoA thiolase of Vibrio vulnificus (strain CMCP6).